We begin with the raw amino-acid sequence, 465 residues long: Cysteine--tRNA ligase (465 aa).

Position 30 (Cys-30) interacts with Zn(2+). Positions 32–42 (ITVYDYCHVGH) match the 'HIGH' region motif. Cys-214, His-239, and Glu-243 together coordinate Zn(2+). The 'KMSKS' region motif lies at 271 to 275 (KMSKS). Residue Lys-274 participates in ATP binding.

The protein belongs to the class-I aminoacyl-tRNA synthetase family. Monomer. The cofactor is Zn(2+).

The protein localises to the cytoplasm. It carries out the reaction tRNA(Cys) + L-cysteine + ATP = L-cysteinyl-tRNA(Cys) + AMP + diphosphate. This chain is Cysteine--tRNA ligase, found in Burkholderia vietnamiensis (strain G4 / LMG 22486) (Burkholderia cepacia (strain R1808)).